A 1089-amino-acid chain; its full sequence is Platelet-derived growth factor receptor alpha (1089 aa).

The first 23 residues, 1-23 (MGTSHPAFLVLGCLLTGLSLILC), serve as a signal peptide directing secretion. Ig-like C2-type domains follow at residues 24–113 (QLSL…NELE), 117–201 (IYIY…FQTI), 202–306 (PFNV…KKVT), 319–410 (PTFS…FELL), and 414–517 (PSSI…LKLV). The Extracellular segment spans residues 24–528 (QLSLPSILPN…PTLRSELTVA (505 aa)). Residues N42, N76, N103, and N179 are each glycosylated (N-linked (GlcNAc...) asparagine). C49 and C100 are disulfide-bonded. Disulfide bonds link C150-C189 and C235-C290. N-linked (GlcNAc...) asparagine glycans are attached at residues N353, N359, N458, and N468. The cysteines at positions 435 and 501 are disulfide-linked. The helical transmembrane segment at 529–549 (AAVLVLLVIVIISLIVLVVIW) threads the bilayer. Topologically, residues 550-1089 (KQKPRYEIRW…SSDLVEDSFL (540 aa)) are cytoplasmic. Y572 and Y574 each carry phosphotyrosine; by autocatalysis. The Protein kinase domain occupies 593 to 954 (LVLGRVLGSG…HLSEIVENLL (362 aa)). ATP contacts are provided by residues 599 to 607 (LGSGAFGKV) and K627. Phosphotyrosine; by autocatalysis occurs at positions 720, 731, 742, 754, 762, and 768. D818 functions as the Proton acceptor in the catalytic mechanism. Residues Y849, Y988, and Y1018 each carry the phosphotyrosine; by autocatalysis modification. Residues 1018 to 1089 (YIIPLPDIDP…SSDLVEDSFL (72 aa)) are disordered. Polar residues predominate over residues 1041–1059 (SSQTSEESAIETGSSSSTF). Residues 1065–1089 (ETIEDIDMMDDIGIDSSDLVEDSFL) show a composition bias toward acidic residues.

Belongs to the protein kinase superfamily. Tyr protein kinase family. CSF-1/PDGF receptor subfamily. In terms of assembly, interacts with homodimeric PDGFA, PDGFB and PDGFC, and with heterodimers formed by PDGFA and PDGFB. Monomer in the absence of bound ligand. Interaction with dimeric PDGFA, PDGFB and/or PDGFC leads to receptor dimerization, where both PDGFRA homodimers and heterodimers with PDGFRB are observed. Interacts (tyrosine phosphorylated) with SHB (via SH2 domain). Interacts (tyrosine phosphorylated) with SHF (via SH2 domain). Interacts (tyrosine phosphorylated) with SRC (via SH2 domain). Interacts (tyrosine phosphorylated) with PIK3R1. Interacts (tyrosine phosphorylated) with PLCG1 (via SH2 domain). Interacts (tyrosine phosphorylated) with CRK, GRB2 and GRB7. Interacts with CD248; this interaction promotes PDGF receptor signaling pathway. As to quaternary structure, (Microbial infection) Interacts with human cytomegalovirus/HHV-5 envelope glycoprotein B/gB. Also interacts with the trimeric complex gH-gL-gO. Trimer-PDGFRA interaction has an inhibitory effect on PDGFRA signaling. In terms of processing, N-glycosylated. Ubiquitinated, leading to its internalization and degradation. Post-translationally, autophosphorylated on tyrosine residues upon ligand binding. Autophosphorylation occurs in trans, i.e. one subunit of the dimeric receptor phosphorylates tyrosine residues on the other subunit. Phosphorylation at Tyr-731 and Tyr-742 is important for interaction with PIK3R1. Phosphorylation at Tyr-720 and Tyr-754 is important for interaction with PTPN11. Phosphorylation at Tyr-762 is important for interaction with CRK. Phosphorylation at Tyr-572 and Tyr-574 is important for interaction with SRC and SRC family members. Phosphorylation at Tyr-988 and Tyr-1018 is important for interaction with PLCG1. Detected in platelets (at protein level). Widely expressed. Detected in brain, fibroblasts, smooth muscle, heart, and embryo. Expressed in primary and metastatic colon tumors and in normal colon tissue.

Its subcellular location is the cell membrane. The protein resides in the cell projection. The protein localises to the cilium. It is found in the golgi apparatus. The enzyme catalyses L-tyrosyl-[protein] + ATP = O-phospho-L-tyrosyl-[protein] + ADP + H(+). With respect to regulation, present in an inactive conformation in the absence of bound ligand. Binding of PDGFA and/or PDGFB leads to dimerization and activation by autophosphorylation on tyrosine residues. Inhibited by imatinib, nilotinib and sorafenib. Its function is as follows. Tyrosine-protein kinase that acts as a cell-surface receptor for PDGFA, PDGFB and PDGFC and plays an essential role in the regulation of embryonic development, cell proliferation, survival and chemotaxis. Depending on the context, promotes or inhibits cell proliferation and cell migration. Plays an important role in the differentiation of bone marrow-derived mesenchymal stem cells. Required for normal skeleton development and cephalic closure during embryonic development. Required for normal development of the mucosa lining the gastrointestinal tract, and for recruitment of mesenchymal cells and normal development of intestinal villi. Plays a role in cell migration and chemotaxis in wound healing. Plays a role in platelet activation, secretion of agonists from platelet granules, and in thrombin-induced platelet aggregation. Binding of its cognate ligands - homodimeric PDGFA, homodimeric PDGFB, heterodimers formed by PDGFA and PDGFB or homodimeric PDGFC -leads to the activation of several signaling cascades; the response depends on the nature of the bound ligand and is modulated by the formation of heterodimers between PDGFRA and PDGFRB. Phosphorylates PIK3R1, PLCG1, and PTPN11. Activation of PLCG1 leads to the production of the cellular signaling molecules diacylglycerol and inositol 1,4,5-trisphosphate, mobilization of cytosolic Ca(2+) and the activation of protein kinase C. Phosphorylates PIK3R1, the regulatory subunit of phosphatidylinositol 3-kinase, and thereby mediates activation of the AKT1 signaling pathway. Mediates activation of HRAS and of the MAP kinases MAPK1/ERK2 and/or MAPK3/ERK1. Promotes activation of STAT family members STAT1, STAT3 and STAT5A and/or STAT5B. Receptor signaling is down-regulated by protein phosphatases that dephosphorylate the receptor and its down-stream effectors, and by rapid internalization of the activated receptor. The protein is Platelet-derived growth factor receptor alpha (PDGFRA) of Homo sapiens (Human).